A 104-amino-acid polypeptide reads, in one-letter code: Integration host factor subunit alpha (104 aa).

This sequence belongs to the bacterial histone-like protein family. In terms of assembly, heterodimer of an alpha and a beta chain.

Its function is as follows. This protein is one of the two subunits of integration host factor, a specific DNA-binding protein that functions in genetic recombination as well as in transcriptional and translational control. In Buchnera aphidicola subsp. Cinara cedri (strain Cc), this protein is Integration host factor subunit alpha.